A 277-amino-acid chain; its full sequence is MGLLECCARCLIGAPFASLVATGLCFFGVALFCGCGHEALTGTEQLIETYFSKNYQDYEFLIDVIHGFQYFIYGTAAFFFLYGALLLAEGFYTTGAVRQIFGDYRTTICGKGLSATVTGGPKGRGARGPQRAHSWQRVCHCLGKWLGHPDKFVGITYVLTIIWLLVFACSAVPVYIYFNTWTTCQSIGNPTKTSASIGTLCADARMYGILPWNAFPGKVCGSNLLSICKTSEFQMTFHLFIAAFVGAAATLVSLVTFIIATTYNFAVLRLMGRGTKF.

Over 2 to 10 the chain is Cytoplasmic; that stretch reads GLLECCARC. S-palmitoyl cysteine attachment occurs at residues cysteine 6, cysteine 7, and cysteine 10. Residues 11–36 form a helical membrane-spanning segment; the sequence is LIGAPFASLVATGLCFFGVALFCGCG. The Extracellular portion of the chain corresponds to 37-59; that stretch reads HEALTGTEQLIETYFSKNYQDYE. The helical transmembrane segment at 60–88 threads the bilayer; the sequence is FLIDVIHGFQYFIYGTAAFFFLYGALLLA. Residues 89–151 are Cytoplasmic-facing; sequence EGFYTTGAVR…LGKWLGHPDK (63 aa). S-palmitoyl cysteine attachment occurs at residues cysteine 109, cysteine 139, and cysteine 141. The helical transmembrane segment at 152–178 threads the bilayer; it reads FVGITYVLTIIWLLVFACSAVPVYIYF. Topologically, residues 179–238 are extracellular; sequence NTWTTCQSIGNPTKTSASIGTLCADARMYGILPWNAFPGKVCGSNLLSICKTSEFQMTFH. Cystine bridges form between cysteine 184–cysteine 228 and cysteine 201–cysteine 220. The O-palmitoyl threonine moiety is linked to residue threonine 199. Residues 239 to 268 form a helical membrane-spanning segment; that stretch reads LFIAAFVGAAATLVSLVTFIIATTYNFAVL. At 269–277 the chain is on the cytoplasmic side; that stretch reads RLMGRGTKF.

Belongs to the myelin proteolipid protein family.

Its subcellular location is the cell membrane. This is the major myelin protein from the central nervous system. It plays an important role in the formation or maintenance of the multilamellar structure of myelin. This Taeniopygia guttata (Zebra finch) protein is Myelin proteolipid protein (PLP1).